Here is a 199-residue protein sequence, read N- to C-terminus: Small ribosomal subunit protein uS7 (199 aa).

The protein belongs to the universal ribosomal protein uS7 family. As to quaternary structure, part of the 30S ribosomal subunit.

Its function is as follows. One of the primary rRNA binding proteins, it binds directly to 16S rRNA where it nucleates assembly of the head domain of the 30S subunit. Is located at the subunit interface close to the decoding center. This chain is Small ribosomal subunit protein uS7, found in Cenarchaeum symbiosum (strain A).